The primary structure comprises 4059 residues: Fibrocystin (4059 aa).

The first 18 residues, 1 to 18, serve as a signal peptide directing secretion; that stretch reads MMLAWLVSLLSMEVLLLA. Residues 19 to 3851 are Extracellular-facing; it reads KPYSSFQFEP…LPVASKERST (3833 aa). One can recognise an IPT/TIG 1; atypical domain in the interval 25–109; the sequence is QFEPAEGSLA…AGPYSLEMRS (85 aa). Asn-55 and Asn-224 each carry an N-linked (GlcNAc...) asparagine glycan. IPT/TIG domains lie at 135 to 230 and 257 to 333; these read PVLY…FSVF and PEIL…FEVG. The 161-residue stretch at 323-483 folds into the PA14 domain; the sequence is AGNRGLRFEV…TWLNPDVVNT (161 aa). Residues Asn-355, Asn-385, Asn-518, Asn-527, Asn-620, Asn-639, Asn-709, Asn-867, Asn-965, Asn-975, Asn-1082, Asn-1114, Asn-1133, Asn-1239, Asn-1273, Asn-1308, Asn-1319, Asn-1344, Asn-1373, Asn-1456, Asn-1471, Asn-1528, Asn-1613, Asn-1627, Asn-1694, Asn-1760, Asn-1775, Asn-1875, Asn-1879, Asn-1915, Asn-1955, Asn-2030, and Asn-2139 are each glycosylated (N-linked (GlcNAc...) asparagine). 2 consecutive IPT/TIG domains span residues 945–997 and 1017–1100; these read LVHF…FMLV and PRLD…AFTY. Residues 1106 to 1190 enclose the IPT/TIG 6; atypical domain; sequence PVIVSLSRNR…IRSQGVDLYI (85 aa). The region spanning 1198–1266 is the IPT/TIG 7 domain; the sequence is SVEPCSGSLL…RADVLTVLAS (69 aa). Residues 1297–1378 form the IPT/TIG 8; atypical domain; the sequence is PVVTAMWGEF…MGFANMSVVP (82 aa). Residues 1385 to 1466 form the IPT/TIG 9 domain; that stretch reads PQIIAIFPTH…ITVLVNGLTS (82 aa). IPT/TIG domains lie at 1482 to 1566 and 1569 to 1637; these read PIVD…RNFF and PQVL…IDVN. One can recognise an IPT/TIG 12; atypical domain in the interval 1654–1738; that stretch reads PELLSVSRSQ…VLRATVTSVT (85 aa). The G8 1 domain occupies 1928–2049; it reads HSWFPQRVPH…PEVTVTYLQA (122 aa). PbH1 repeat units follow at residues 2244–2266 and 2287–2321; these read TWGL…LLGS and EQGS…YTFS. An N-linked (GlcNAc...) asparagine glycan is attached at Asn-2380. 2 PbH1 repeats span residues 2404–2426 and 2459–2481; these read SNNL…DILE and RWEL…AIRT. N-linked (GlcNAc...) asparagine glycans are attached at residues Asn-2466, Asn-2503, Asn-2529, Asn-2547, Asn-2581, Asn-2589, Asn-2627, Asn-2747, and Asn-2762. The region spanning 2741–2867 is the G8 2 domain; sequence KGWGGYNHTI…PKKSWVHLGA (127 aa). PbH1 repeat units follow at residues 3004–3026 and 3027–3049; these read SAGS…HASS and SHGV…DVEG. Asn-3051 is a glycosylation site (N-linked (GlcNAc...) asparagine). A PbH1 7 repeat occupies 3080–3102; that stretch reads AEDIILHGNVVAGSERLGFHVGG. Residues Asn-3133 and Asn-3162 are each glycosylated (N-linked (GlcNAc...) asparagine). The stretch at 3188–3212 is one PbH1 8 repeat; sequence TVQITLRNSVIVATSSSFDCIHDRK. Residues Asn-3218, Asn-3719, and Asn-3831 are each glycosylated (N-linked (GlcNAc...) asparagine). Residues 3852–3872 traverse the membrane as a helical segment; that stretch reads IILALSLCSVASWVALSCLVC. Residues 3869-3886 form a ciliary targeting sequence (CST) region; that stretch reads CLVCCWFKKSKTRKIKPE. At 3873–4059 the chain is on the cytoplasmic side; it reads CWFKKSKTRK…LHTAPPETIQ (187 aa). A compositionally biased stretch (basic and acidic residues) spans 3885–3898; the sequence is PEDISESQAKEQKK. The disordered stretch occupies residues 3885–3915; sequence PEDISESQAKEQKKNTHNSSKPRGLQAKTAK. The nuclear localization signal (NLS) stretch occupies residues 3946–3970; it reads KRKVSRLAVTEERTTTPAPKIPRIT. The interval 4015–4038 is disordered; the sequence is QERKQGQEPSQLDKGSDCTGLSQE.

In terms of assembly, interacts with CAMLG. Interacts with PKD2. Interacts (via CST) with ARF4; this interaction allows an efficient PKHD1 trafficking to the cilium. Interacts (via CST) with RAB8A; this interaction controls trafficking through the endomembrane systeme and to the cilium. Interacts (via CST) with TULP3; this interaction allows PKHD1 trafficking to the cilium. Post-translationally, palmitoylated. Palmitoylation facilitates the trafficking to the cilia and membrane targeting. In terms of processing, N-glycosylated. Several proteolytic cleavages occur within the extracellular domain, whereas at least one cleavage occurs within the cytoplasmic domain. Cleaved by a probable proprotein convertase which produces an extracellular domain (polyductin extracellular domain, (PECD)) and a C-terminal fragment (polyductin transmembrane fragment (PTM)) which are tethered together by disulfide bonds. This extracellular domain (PECD) is then shed from the primary cilium by activation of a member of the ADAM metalloproteinase disintegrins family, resulting in concomitant release of an intra-cellular C-terminal fragment (ICD) via a gamma-secretase-dependent process. The proteolytic cleavage of the C-terminal intracellular fragment (ICD) is controlled by cytosolic calcium concentration and activation of PKC. In terms of tissue distribution, expressed in bile ducts and distal nephron segments but is absent from the proximal tubule. Expressed in pancreas and kidney but also in the liver. Expressed primarily in the distal tubule and thick ascending limb of the loop of Henle, and at low-level in the proximal tubule before renal development is complete at P0.

It localises to the cell membrane. Its subcellular location is the cytoplasm. The protein resides in the apical cell membrane. The protein localises to the cytoskeleton. It is found in the cilium basal body. It localises to the cell projection. Its subcellular location is the cilium. The protein resides in the spindle. The protein localises to the chromosome. It is found in the centromere. It localises to the nucleus. Its subcellular location is the secreted. The protein resides in the extracellular exosome. The protein localises to the endoplasmic reticulum. It is found in the golgi apparatus. Functionally, promotes ciliogenesis in renal epithelial cells and therefore participates in the tubules formation and/or ensures the maintenance of the architecture of the lumen of the kidney. Has an impact on cellular symmetry by ensuring correct bipolar cell division through the regulation of centrosome duplication and mitotic spindle assembly and by maintaining oriented cell division (OCD) during tubular elongation through planar cell polarity (PCP) pathway. During epithelial cell morphogenesis, it also regulates cell-cell and cell-matrix adhesion and participates in cell motility. Promotes cell-cell contact through the positive regulation of PTK2 kinase activity leading to either positive regulation of epithelial cell proliferation through the HRAS/RAF1 pathways, or negative regulation of apoptosis through the PDK1/AKT1 pathway. May act in collecting-duct and biliary differentiation. May participate in the regulation of the cholangiocytes proliferation and the CCN2 production in an CXCL8-dependent manner. This Mus musculus (Mouse) protein is Fibrocystin.